A 203-amino-acid chain; its full sequence is Holliday junction branch migration complex subunit RuvA (203 aa).

Positions 1-63 are domain I; the sequence is MIGQLSGKVD…EEHIHLYGFL (63 aa). A domain II region spans residues 64 to 142; sequence TLEEKIFFNL…KISSGSAIIK (79 aa). The tract at residues 143 to 149 is flexible linker; it reads ESLNIKN. Residues 150 to 203 are domain III; it reads ITPVASNEVIKALVNLGFSRFEAQNAVQGIITQNPEISIDELIKTALKNRNSNF.

The protein belongs to the RuvA family. In terms of assembly, homotetramer. Forms an RuvA(8)-RuvB(12)-Holliday junction (HJ) complex. HJ DNA is sandwiched between 2 RuvA tetramers; dsDNA enters through RuvA and exits via RuvB. An RuvB hexamer assembles on each DNA strand where it exits the tetramer. Each RuvB hexamer is contacted by two RuvA subunits (via domain III) on 2 adjacent RuvB subunits; this complex drives branch migration. In the full resolvosome a probable DNA-RuvA(4)-RuvB(12)-RuvC(2) complex forms which resolves the HJ.

The protein localises to the cytoplasm. Its function is as follows. The RuvA-RuvB-RuvC complex processes Holliday junction (HJ) DNA during genetic recombination and DNA repair, while the RuvA-RuvB complex plays an important role in the rescue of blocked DNA replication forks via replication fork reversal (RFR). RuvA specifically binds to HJ cruciform DNA, conferring on it an open structure. The RuvB hexamer acts as an ATP-dependent pump, pulling dsDNA into and through the RuvAB complex. HJ branch migration allows RuvC to scan DNA until it finds its consensus sequence, where it cleaves and resolves the cruciform DNA. This chain is Holliday junction branch migration complex subunit RuvA, found in Rickettsia conorii (strain ATCC VR-613 / Malish 7).